The chain runs to 133 residues: Putative pre-16S rRNA nuclease (133 aa).

This sequence belongs to the YqgF nuclease family.

Its subcellular location is the cytoplasm. In terms of biological role, could be a nuclease involved in processing of the 5'-end of pre-16S rRNA. This chain is Putative pre-16S rRNA nuclease, found in Alcanivorax borkumensis (strain ATCC 700651 / DSM 11573 / NCIMB 13689 / SK2).